Reading from the N-terminus, the 178-residue chain is Translation initiation factor IF-3 (178 aa).

The disordered stretch occupies residues 1–20 (MRRPFRATPVQKDGPRSNRD).

Belongs to the IF-3 family. In terms of assembly, monomer.

The protein localises to the cytoplasm. In terms of biological role, IF-3 binds to the 30S ribosomal subunit and shifts the equilibrium between 70S ribosomes and their 50S and 30S subunits in favor of the free subunits, thus enhancing the availability of 30S subunits on which protein synthesis initiation begins. The sequence is that of Translation initiation factor IF-3 from Brucella anthropi (strain ATCC 49188 / DSM 6882 / CCUG 24695 / JCM 21032 / LMG 3331 / NBRC 15819 / NCTC 12168 / Alc 37) (Ochrobactrum anthropi).